Consider the following 248-residue polypeptide: Methionine aminopeptidase 1 (248 aa).

Residue His77 participates in substrate binding. Residues Asp94, Asp105, and His168 each coordinate a divalent metal cation. His175 serves as a coordination point for substrate. A divalent metal cation-binding residues include Glu201 and Glu232.

Monomer. Co(2+) is required as a cofactor. The cofactor is Zn(2+). Requires Mn(2+) as cofactor. It depends on Fe(2+) as a cofactor.

It is found in the cytoplasm. It carries out the reaction Release of N-terminal amino acids, preferentially methionine, from peptides and arylamides.. Its function is as follows. Removes the N-terminal methionine from nascent proteins. The N-terminal methionine is often cleaved when the second residue in the primary sequence is small and uncharged (Met-Ala-, Cys, Gly, Pro, Ser, Thr, or Val). Requires deformylation of the N(alpha)-formylated initiator methionine before it can be hydrolyzed. This is Methionine aminopeptidase 1 from Bacillus subtilis (strain 168).